We begin with the raw amino-acid sequence, 387 residues long: Acetylornithine aminotransferase (387 aa).

Pyridoxal 5'-phosphate-binding positions include 97-98 and Phe130; that span reads GT. Arg133 is a binding site for N(2)-acetyl-L-ornithine. 215 to 218 is a binding site for pyridoxal 5'-phosphate; the sequence is DEVQ. Lys244 is subject to N6-(pyridoxal phosphate)lysine. Residue Thr273 coordinates pyridoxal 5'-phosphate.

This sequence belongs to the class-III pyridoxal-phosphate-dependent aminotransferase family. ArgD subfamily. As to quaternary structure, homodimer. It depends on pyridoxal 5'-phosphate as a cofactor.

The protein localises to the cytoplasm. The catalysed reaction is N(2)-acetyl-L-ornithine + 2-oxoglutarate = N-acetyl-L-glutamate 5-semialdehyde + L-glutamate. It functions in the pathway amino-acid biosynthesis; L-arginine biosynthesis; N(2)-acetyl-L-ornithine from L-glutamate: step 4/4. This is Acetylornithine aminotransferase from Clostridium acetobutylicum (strain ATCC 824 / DSM 792 / JCM 1419 / IAM 19013 / LMG 5710 / NBRC 13948 / NRRL B-527 / VKM B-1787 / 2291 / W).